Consider the following 93-residue polypeptide: Small ribosomal subunit protein uS19 (93 aa).

Belongs to the universal ribosomal protein uS19 family.

Protein S19 forms a complex with S13 that binds strongly to the 16S ribosomal RNA. This chain is Small ribosomal subunit protein uS19, found in Synechococcus sp. (strain JA-3-3Ab) (Cyanobacteria bacterium Yellowstone A-Prime).